The primary structure comprises 1028 residues: Formin-like protein 3 (1028 aa).

Glycine 2 carries N-myristoyl glycine lipidation. The region spanning 26–472 is the GBD/FH3 domain; it reads MPMPEPCELE…EAFQRRCHLE (447 aa). A Phosphothreonine modification is found at threonine 95. A Phosphoserine modification is found at serine 174. The disordered stretch occupies residues 493–541; it reads ELSEGMPPSDLDLLAPAPPPEEVLPLPPPPAPPLPPPPPPLPDKCPPAP. Positions 508 to 541 are enriched in pro residues; the sequence is PAPPPEEVLPLPPPPAPPLPPPPPPLPDKCPPAP. Residues 561-951 enclose the FH2 domain; it reads IKKPIKTKFR…MREKQLAQEA (391 aa). Residues 986–1018 enclose the DAD domain; sequence YEGKDGTIEDIITVLKSVPFTARTAKRGSRFFC. At serine 1014 the chain carries Phosphoserine.

Belongs to the formin homology family. As to quaternary structure, interacts with SRGAP2 (via SH3 domain). As to expression, expressed in endothelial cells.

Its subcellular location is the cytoplasm. The protein resides in the cell membrane. In terms of biological role, plays a role in the regulation of cell morphology and cytoskeletal organization. Required in the control of cell shape and migration. Required for developmental angiogenesis. In this process, required for microtubule reorganization and for efficient endothelial cell elongation. In quiescent endothelial cells, triggers rearrangement of the actin cytoskeleton, but does not alter microtubule alignement. In Homo sapiens (Human), this protein is Formin-like protein 3 (FMNL3).